Here is a 186-residue protein sequence, read N- to C-terminus: Elongation factor P (186 aa).

Belongs to the elongation factor P family.

It localises to the cytoplasm. Its pathway is protein biosynthesis; polypeptide chain elongation. Its function is as follows. Involved in peptide bond synthesis. Stimulates efficient translation and peptide-bond synthesis on native or reconstituted 70S ribosomes in vitro. Probably functions indirectly by altering the affinity of the ribosome for aminoacyl-tRNA, thus increasing their reactivity as acceptors for peptidyl transferase. The polypeptide is Elongation factor P (Brucella abortus (strain S19)).